A 371-amino-acid polypeptide reads, in one-letter code: MKIVIAPDSFKESLTAQQVAEAIKRGFQQSIADVECLLCPVGDGGEGTVDAIRHSLDLEEKCLQVTGPFGQKEVMRYFQKEQLALFEVADLVGLGKIPLEKRNPLQIQTRGIGELIRHLISQEIKEIYIGVGGTASNDGGIGIAAGLGYQFYDEDGNALPVCGQSLLNLASVSTENRYEIPEDVHIRILADVVSPLCGHQGATYTFGKQKGLDSTMFEAVDQAIQDFYEKVSPATLKLKGAGAGGGIAGGLCAFAQASIVSGIDTCLDLIDFDKKVSDVDLVIVGEGRLDRQSLAGKAPIGVAKRTPVGVPVVAICGSLVEDLPSLPFENIQAAFSILEKSEPLEDSLKNASLYLEHTASNIGHLLNMPKI.

The protein belongs to the glycerate kinase type-1 family.

It catalyses the reaction (R)-glycerate + ATP = (2R)-3-phosphoglycerate + ADP + H(+). The sequence is that of Glycerate kinase (glxK) from Neisseria meningitidis serogroup B (strain ATCC BAA-335 / MC58).